The following is a 250-amino-acid chain: Putative beta-carotene-binding protein (250 aa).

In terms of tissue distribution, deposited in the epidermis and cuticle of male locusts during their sexual maturation.

Has beta-carotene-binding activity. May be involved in the transport of carotenes from internal tissues to epidermis and cuticle of the locust. This Schistocerca gregaria (Desert locust) protein is Putative beta-carotene-binding protein.